Consider the following 308-residue polypeptide: D-alanine--D-alanine ligase (308 aa).

Positions K102 to E302 constitute an ATP-grasp domain. P128 to T183 serves as a coordination point for ATP. 3 residues coordinate Mg(2+): D252, E269, and N271.

It belongs to the D-alanine--D-alanine ligase family. Mg(2+) is required as a cofactor. The cofactor is Mn(2+).

The protein localises to the cytoplasm. The catalysed reaction is 2 D-alanine + ATP = D-alanyl-D-alanine + ADP + phosphate + H(+). It functions in the pathway cell wall biogenesis; peptidoglycan biosynthesis. In terms of biological role, cell wall formation. The polypeptide is D-alanine--D-alanine ligase (Brucella anthropi (strain ATCC 49188 / DSM 6882 / CCUG 24695 / JCM 21032 / LMG 3331 / NBRC 15819 / NCTC 12168 / Alc 37) (Ochrobactrum anthropi)).